The chain runs to 330 residues: tRNA-modifying protein YgfZ (330 aa).

2 residues coordinate folate: Trp28 and Trp190.

Belongs to the tRNA-modifying YgfZ family.

Its subcellular location is the cytoplasm. Its function is as follows. Folate-binding protein involved in regulating the level of ATP-DnaA and in the modification of some tRNAs. It is probably a key factor in regulatory networks that act via tRNA modification, such as initiation of chromosomal replication. The protein is tRNA-modifying protein YgfZ of Yersinia pseudotuberculosis serotype O:1b (strain IP 31758).